The sequence spans 366 residues: 3-isopropylmalate dehydrogenase (366 aa).

77–90 (GPKWDDNPPHLRPE) provides a ligand contact to NAD(+). Residues R97, R107, R135, and D223 each contribute to the substrate site. The Mg(2+) site is built by D223, D246, and D250. Residue 280–292 (GSAPDIAGMNKAN) participates in NAD(+) binding.

Belongs to the isocitrate and isopropylmalate dehydrogenases family. LeuB type 1 subfamily. In terms of assembly, homodimer. Requires Mg(2+) as cofactor. The cofactor is Mn(2+).

The protein localises to the cytoplasm. It carries out the reaction (2R,3S)-3-isopropylmalate + NAD(+) = 4-methyl-2-oxopentanoate + CO2 + NADH. It participates in amino-acid biosynthesis; L-leucine biosynthesis; L-leucine from 3-methyl-2-oxobutanoate: step 3/4. In terms of biological role, catalyzes the oxidation of 3-carboxy-2-hydroxy-4-methylpentanoate (3-isopropylmalate) to 3-carboxy-4-methyl-2-oxopentanoate. The product decarboxylates to 4-methyl-2 oxopentanoate. The chain is 3-isopropylmalate dehydrogenase (leuB) from Bacillus caldotenax.